The chain runs to 377 residues: Protein RecA (377 aa).

76–83 (GPESSGKT) lines the ATP pocket.

Belongs to the RecA family.

The protein resides in the cytoplasm. Can catalyze the hydrolysis of ATP in the presence of single-stranded DNA, the ATP-dependent uptake of single-stranded DNA by duplex DNA, and the ATP-dependent hybridization of homologous single-stranded DNAs. It interacts with LexA causing its activation and leading to its autocatalytic cleavage. The sequence is that of Protein RecA from Corynebacterium aurimucosum (strain ATCC 700975 / DSM 44827 / CIP 107346 / CN-1) (Corynebacterium nigricans).